The primary structure comprises 182 residues: Large ribosomal subunit protein uL5 (182 aa).

This sequence belongs to the universal ribosomal protein uL5 family. Part of the 50S ribosomal subunit; part of the 5S rRNA/L5/L18/L25 subcomplex. Contacts the 5S rRNA and the P site tRNA. Forms a bridge to the 30S subunit in the 70S ribosome.

This is one of the proteins that bind and probably mediate the attachment of the 5S RNA into the large ribosomal subunit, where it forms part of the central protuberance. In the 70S ribosome it contacts protein S13 of the 30S subunit (bridge B1b), connecting the 2 subunits; this bridge is implicated in subunit movement. Contacts the P site tRNA; the 5S rRNA and some of its associated proteins might help stabilize positioning of ribosome-bound tRNAs. The polypeptide is Large ribosomal subunit protein uL5 (Borrelia garinii subsp. bavariensis (strain ATCC BAA-2496 / DSM 23469 / PBi) (Borreliella bavariensis)).